Here is an 83-residue protein sequence, read N- to C-terminus: Hainantoxin-III 9 (83 aa).

An N-terminal signal peptide occupies residues 1–21 (MKASMFLALAGLALLFVVCYA). Residues 22-48 (SESEEKEFPIELLSKIFAVDVFKGEER) constitute a propeptide that is removed on maturation. Disulfide bonds link Cys-50–Cys-65, Cys-57–Cys-70, and Cys-64–Cys-77. Leu-81 is modified (leucine amide).

It belongs to the neurotoxin 10 (Hwtx-1) family. 15 (Hntx-3) subfamily. Monomer. As to expression, expressed by the venom gland.

The protein localises to the secreted. Its function is as follows. Selective antagonist of neuronal tetrodotoxin (TTX)-sensitive voltage-gated sodium channels (IC(50)=1270 nM on Nav1.1/SCN1A, 270 nM on Nav1.2/SCN2A, 491 nM on Nav1.3/SCN3A and 232 nM on Nav1.7/SCN9A). This toxin suppress Nav1.7 current amplitude without significantly altering the activation, inactivation, and repriming kinetics. Short extreme depolarizations partially activate the toxin-bound channel, indicating voltage-dependent inhibition of this toxin. This toxin increases the deactivation of the Nav1.7 current after extreme depolarizations. The toxin-Nav1.7 complex is gradually dissociated upon prolonged strong depolarizations in a voltage-dependent manner, and the unbound toxin rebinds to Nav1.7 after a long repolarization. Moreover, analysis of chimeric channels showed that the DIIS3-S4 linker is critical for toxin binding to Nav1.7. These data are consistent with this toxin interacting with Nav1.7 site 4 and trapping the domain II voltage sensor in the closed state. This chain is Hainantoxin-III 9, found in Cyriopagopus hainanus (Chinese bird spider).